Here is an 86-residue protein sequence, read N- to C-terminus: Exodeoxyribonuclease 7 small subunit (86 aa).

It belongs to the XseB family. In terms of assembly, heterooligomer composed of large and small subunits.

It localises to the cytoplasm. The catalysed reaction is Exonucleolytic cleavage in either 5'- to 3'- or 3'- to 5'-direction to yield nucleoside 5'-phosphates.. Bidirectionally degrades single-stranded DNA into large acid-insoluble oligonucleotides, which are then degraded further into small acid-soluble oligonucleotides. The chain is Exodeoxyribonuclease 7 small subunit from Xanthomonas euvesicatoria pv. vesicatoria (strain 85-10) (Xanthomonas campestris pv. vesicatoria).